The following is a 394-amino-acid chain: G2/mitotic-specific cyclin-B (394 aa).

Residues 360 to 394 (QSHPSPNSRLDQEEDMASSKFMSDQQATQELKSIR) are disordered. The span at 379–394 (KFMSDQQATQELKSIR) shows a compositional bias: polar residues.

The protein belongs to the cyclin family. Cyclin AB subfamily. As to quaternary structure, interacts with the CDK1 protein kinase to form a serine/threonine kinase holoenzyme complex also known as maturation promoting factor (MPF). The cyclin subunit imparts substrate specificity to the complex.

In terms of biological role, essential for the control of the cell cycle at the G2/M (mitosis) transition. The polypeptide is G2/mitotic-specific cyclin-B (Patiria pectinifera (Starfish)).